The following is a 303-amino-acid chain: Mycothiol acetyltransferase (303 aa).

N-acetyltransferase domains follow at residues 1 to 150 and 162 to 303; these read MALL…RPLD and VTIR…QFGR. Glutamate 18 is a 1D-myo-inositol 2-(L-cysteinylamino)-2-deoxy-alpha-D-glucopyranoside binding site. Residue 77-79 participates in acetyl-CoA binding; the sequence is LAV. Positions 189, 229, and 237 each coordinate 1D-myo-inositol 2-(L-cysteinylamino)-2-deoxy-alpha-D-glucopyranoside. Acetyl-CoA contacts are provided by residues 241–243 and 248–254; these read VGV and QGNGLGR. Residue tyrosine 275 participates in 1D-myo-inositol 2-(L-cysteinylamino)-2-deoxy-alpha-D-glucopyranoside binding. 280-285 is a binding site for acetyl-CoA; it reads NTAAIK.

It belongs to the acetyltransferase family. MshD subfamily. As to quaternary structure, monomer.

The enzyme catalyses 1D-myo-inositol 2-(L-cysteinylamino)-2-deoxy-alpha-D-glucopyranoside + acetyl-CoA = mycothiol + CoA + H(+). Catalyzes the transfer of acetyl from acetyl-CoA to desacetylmycothiol (Cys-GlcN-Ins) to form mycothiol. This Saccharopolyspora erythraea (strain ATCC 11635 / DSM 40517 / JCM 4748 / NBRC 13426 / NCIMB 8594 / NRRL 2338) protein is Mycothiol acetyltransferase.